The chain runs to 254 residues: Segregation and condensation protein A (254 aa).

It belongs to the ScpA family. In terms of assembly, component of a cohesin-like complex composed of ScpA, ScpB and the Smc homodimer, in which ScpA and ScpB bind to the head domain of Smc. The presence of the three proteins is required for the association of the complex with DNA.

It localises to the cytoplasm. Participates in chromosomal partition during cell division. May act via the formation of a condensin-like complex containing Smc and ScpB that pull DNA away from mid-cell into both cell halves. The sequence is that of Segregation and condensation protein A from Clostridium tetani (strain Massachusetts / E88).